The primary structure comprises 94 residues: uncharacterized protein (94 aa).

Positions 13-67 (IQESLDELNVSLREFARAMEIAPSTASRLLTGKAALTPEMAIKLSVVIGSSPQMW) constitute an HTH cro/C1-type domain. Residues 24–43 (LREFARAMEIAPSTASRLLT) constitute a DNA-binding region (H-T-H motif).

It belongs to the VapA/VapI family.

This is an uncharacterized protein from Escherichia coli (strain K12).